The primary structure comprises 73 residues: uncharacterized protein (73 aa).

Residues 54–72 (VSFIVAPTVMQVQCLFFFI) traverse the membrane as a helical segment.

Its subcellular location is the membrane. This is an uncharacterized protein from Saccharomyces cerevisiae (strain ATCC 204508 / S288c) (Baker's yeast).